The sequence spans 131 residues: Fumarate reductase subunit C (131 aa).

The next 3 helical transmembrane spans lie at 30-50, 57-77, and 109-129; these read EGTAVPAVWFSIELIFGLFAL, WMGFVGFLQNPVVVILNLIAL, and IIKGLWVVTAVVTVVILYVAL.

The protein belongs to the FrdC family. In terms of assembly, part of an enzyme complex containing four subunits: a flavoprotein (FrdA), an iron-sulfur protein (FrdB), and two hydrophobic anchor proteins (FrdC and FrdD).

Its subcellular location is the cell inner membrane. Its function is as follows. Two distinct, membrane-bound, FAD-containing enzymes are responsible for the catalysis of fumarate and succinate interconversion; fumarate reductase is used in anaerobic growth, and succinate dehydrogenase is used in aerobic growth. Anchors the catalytic components of the fumarate reductase complex to the cell inner membrane, binds quinones. The chain is Fumarate reductase subunit C from Citrobacter koseri (strain ATCC BAA-895 / CDC 4225-83 / SGSC4696).